A 240-amino-acid polypeptide reads, in one-letter code: Ornithine decarboxylase antizyme (240 aa).

Disordered regions lie at residues 18–45 and 69–95; these read RSEP…SSAG and DHDR…SSEF. Positions 21–33 are enriched in polar residues; the sequence is PISSSNRATKRTI. Positions 34 to 43 are enriched in low complexity; it reads SSSSSSSSSS. The segment covering 69-84 has biased composition (basic and acidic residues); sequence DHDRASPLKEYNRKTS. The span at 85 to 95 shows a compositional bias: polar residues; that stretch reads IDSTTTASSEF.

It belongs to the ODC antizyme family. In terms of assembly, interacts with ODC1 and thereby sterically blocks ODC homodimerization. As to expression, preferentially expressed in adult female midguts.

Functionally, ornithine decarboxylase (ODC) antizyme protein that negatively regulates ODC activity and intracellular polyamine biosynthesis and uptake in response to increased intracellular polyamine levels. Binds to ODC monomers, inhibiting the assembly of the functional ODC homodimer, and targets the monomers for ubiquitin-independent proteolytic destruction by the 26S proteasome. This chain is Ornithine decarboxylase antizyme (Oda), found in Aedes aegypti (Yellowfever mosquito).